The primary structure comprises 1058 residues: Carbamoyl phosphate synthase large chain (1058 aa).

The segment at 1-401 (MPKRTDIQKI…SLLKACRSLE (401 aa)) is carboxyphosphate synthetic domain. ATP is bound by residues Arg-129, Arg-169, Gly-175, Gly-176, Arg-208, Ile-210, Glu-215, Gly-241, Ile-242, His-243, Gln-284, and Glu-298. In terms of domain architecture, ATP-grasp 1 spans 133–327 (KQLMEELEQP…IAKLAAKIAV (195 aa)). 3 residues coordinate Mg(2+): Gln-284, Glu-298, and Asn-300. Gln-284, Glu-298, and Asn-300 together coordinate Mn(2+). The tract at residues 402 to 546 (IGVHHNEIPE…YSTYGWENES (145 aa)) is oligomerization domain. Positions 547-929 (IRSDKESVLV…ALYKAFEASY (383 aa)) are carbamoyl phosphate synthetic domain. An ATP-grasp 2 domain is found at 671-861 (EQALKELDIP…MAQVATKLIL (191 aa)). Residues Arg-707, Ser-746, Ile-748, Glu-752, Gly-777, Val-778, His-779, Ser-780, Gln-820, and Glu-832 each coordinate ATP. Mg(2+) contacts are provided by Gln-820, Glu-832, and Asn-834. Residues Gln-820, Glu-832, and Asn-834 each contribute to the Mn(2+) site. The region spanning 930–1058 (LHLPTFGNVV…ESRSFVTEAI (129 aa)) is the MGS-like domain. Residues 930–1058 (LHLPTFGNVV…ESRSFVTEAI (129 aa)) form an allosteric domain region.

This sequence belongs to the CarB family. Composed of two chains; the small (or glutamine) chain promotes the hydrolysis of glutamine to ammonia, which is used by the large (or ammonia) chain to synthesize carbamoyl phosphate. Tetramer of heterodimers (alpha,beta)4. The cofactor is Mg(2+). Mn(2+) is required as a cofactor.

The enzyme catalyses hydrogencarbonate + L-glutamine + 2 ATP + H2O = carbamoyl phosphate + L-glutamate + 2 ADP + phosphate + 2 H(+). The catalysed reaction is hydrogencarbonate + NH4(+) + 2 ATP = carbamoyl phosphate + 2 ADP + phosphate + 2 H(+). It participates in amino-acid biosynthesis; L-arginine biosynthesis; carbamoyl phosphate from bicarbonate: step 1/1. It functions in the pathway pyrimidine metabolism; UMP biosynthesis via de novo pathway; (S)-dihydroorotate from bicarbonate: step 1/3. Large subunit of the glutamine-dependent carbamoyl phosphate synthetase (CPSase). CPSase catalyzes the formation of carbamoyl phosphate from the ammonia moiety of glutamine, carbonate, and phosphate donated by ATP, constituting the first step of 2 biosynthetic pathways, one leading to arginine and/or urea and the other to pyrimidine nucleotides. The large subunit (synthetase) binds the substrates ammonia (free or transferred from glutamine from the small subunit), hydrogencarbonate and ATP and carries out an ATP-coupled ligase reaction, activating hydrogencarbonate by forming carboxy phosphate which reacts with ammonia to form carbamoyl phosphate. The chain is Carbamoyl phosphate synthase large chain from Streptococcus pneumoniae serotype 19F (strain G54).